Consider the following 541-residue polypeptide: Chlorophyllide a oxygenase, chloroplastic (541 aa).

A coiled-coil region spans residues 114–151; that stretch reads LAREFKSIGTLRKELAELQEELAKAHNQVHLSETRVSS. Polar residues predominate over residues 178–192; the sequence is AECTSLAPSTSSASR. The interval 178–208 is disordered; it reads AECTSLAPSTSSASRVVNKKPPRRSLNVSGP. The 101-residue stretch at 220–320 folds into the Rieske domain; sequence WYPVAFSSDL…CFEQEGMVWI (101 aa). 4 residues coordinate [2Fe-2S] cluster: C261, H263, C280, and H283. D359, D363, H366, and H371 together coordinate Fe cation.

In terms of tissue distribution, expressed in leaves and germinating seedlings, but not in sheaths and roots.

It is found in the plastid. The protein localises to the chloroplast membrane. It localises to the chloroplast thylakoid membrane. It carries out the reaction chlorophyllide a + 2 NADPH + 2 O2 + 2 H(+) = chlorophyllide b + 2 NADP(+) + 3 H2O. Its function is as follows. Catalyzes a two-step oxygenase reaction involved in the synthesis of chlorophyll b. Acts specifically on the non-esterified chlorophyllide a and not on chlorophyll a. This is Chlorophyllide a oxygenase, chloroplastic (CAO) from Oryza sativa subsp. japonica (Rice).